The following is a 484-amino-acid chain: BPI fold-containing family B member 1 (484 aa).

An N-terminal signal peptide occupies residues 1-21 (MAGPWTFTLLCGLLAATLIQA). Residue asparagine 48 is glycosylated (N-linked (GlcNAc...) asparagine). A disulfide bridge connects residues cysteine 158 and cysteine 201. N-linked (GlcNAc...) asparagine glycosylation is found at asparagine 264 and asparagine 401.

Belongs to the BPI/LBP/Plunc superfamily. Plunc family. Detected in duodenum mucosal crypts of cholera patients, near Paneth cells (at protein level). Detected in trachea, nasal septal epithelium and lung.

Its subcellular location is the secreted. In terms of biological role, may play a role in innate immunity in mouth, nose and lungs. Binds bacterial lipopolysaccharide (LPS) and modulates the cellular responses to LPS. In Homo sapiens (Human), this protein is BPI fold-containing family B member 1 (BPIFB1).